The sequence spans 483 residues: Glutamyl-tRNA(Gln) amidotransferase subunit A (483 aa).

Catalysis depends on charge relay system residues Lys-75 and Ser-150. Catalysis depends on Ser-174, which acts as the Acyl-ester intermediate.

Belongs to the amidase family. GatA subfamily. In terms of assembly, heterotrimer of A, B and C subunits.

It catalyses the reaction L-glutamyl-tRNA(Gln) + L-glutamine + ATP + H2O = L-glutaminyl-tRNA(Gln) + L-glutamate + ADP + phosphate + H(+). Its function is as follows. Allows the formation of correctly charged Gln-tRNA(Gln) through the transamidation of misacylated Glu-tRNA(Gln) in organisms which lack glutaminyl-tRNA synthetase. The reaction takes place in the presence of glutamine and ATP through an activated gamma-phospho-Glu-tRNA(Gln). The protein is Glutamyl-tRNA(Gln) amidotransferase subunit A of Deinococcus geothermalis (strain DSM 11300 / CIP 105573 / AG-3a).